Here is a 1024-residue protein sequence, read N- to C-terminus: Beta-galactosidase (1024 aa).

Substrate-binding residues include N103 and D202. Na(+) is bound at residue D202. Residues E417, H419, and E462 each coordinate Mg(2+). Substrate-binding positions include E462 and 538-541 (EYAH). The Proton donor role is filled by E462. Residue E538 is the Nucleophile of the active site. Position 598 (N598) interacts with Mg(2+). Na(+) contacts are provided by F602 and N605. 2 residues coordinate substrate: N605 and W1000.

The protein belongs to the glycosyl hydrolase 2 family. In terms of assembly, homotetramer. It depends on Mg(2+) as a cofactor. Na(+) is required as a cofactor.

The enzyme catalyses Hydrolysis of terminal non-reducing beta-D-galactose residues in beta-D-galactosides.. The polypeptide is Beta-galactosidase (Escherichia coli O1:K1 / APEC).